Consider the following 363-residue polypeptide: S-adenosylmethionine:tRNA ribosyltransferase-isomerase (363 aa).

This sequence belongs to the QueA family. Monomer.

The protein localises to the cytoplasm. It catalyses the reaction 7-aminomethyl-7-carbaguanosine(34) in tRNA + S-adenosyl-L-methionine = epoxyqueuosine(34) in tRNA + adenine + L-methionine + 2 H(+). Its pathway is tRNA modification; tRNA-queuosine biosynthesis. Functionally, transfers and isomerizes the ribose moiety from AdoMet to the 7-aminomethyl group of 7-deazaguanine (preQ1-tRNA) to give epoxyqueuosine (oQ-tRNA). The chain is S-adenosylmethionine:tRNA ribosyltransferase-isomerase from Mannheimia succiniciproducens (strain KCTC 0769BP / MBEL55E).